A 515-amino-acid polypeptide reads, in one-letter code: DNA-directed RNA polymerase subunit Rpo2N (515 aa).

The protein belongs to the RNA polymerase beta chain family. Part of the RNA polymerase complex.

The protein resides in the cytoplasm. The catalysed reaction is RNA(n) + a ribonucleoside 5'-triphosphate = RNA(n+1) + diphosphate. DNA-dependent RNA polymerase (RNAP) catalyzes the transcription of DNA into RNA using the four ribonucleoside triphosphates as substrates. The Rpo2 subunit (Rpo2N and Rpo2C in this organism) is implicated in DNA promoter recognition and in nucleotide binding. The sequence is that of DNA-directed RNA polymerase subunit Rpo2N from Methanothermobacter thermautotrophicus (strain Winter) (Methanobacterium thermoautotrophicum).